The primary structure comprises 235 residues: Phosphoribosylaminoimidazole-succinocarboxamide synthase (235 aa).

It belongs to the SAICAR synthetase family.

The catalysed reaction is 5-amino-1-(5-phospho-D-ribosyl)imidazole-4-carboxylate + L-aspartate + ATP = (2S)-2-[5-amino-1-(5-phospho-beta-D-ribosyl)imidazole-4-carboxamido]succinate + ADP + phosphate + 2 H(+). The protein operates within purine metabolism; IMP biosynthesis via de novo pathway; 5-amino-1-(5-phospho-D-ribosyl)imidazole-4-carboxamide from 5-amino-1-(5-phospho-D-ribosyl)imidazole-4-carboxylate: step 1/2. In Caldanaerobacter subterraneus subsp. tengcongensis (strain DSM 15242 / JCM 11007 / NBRC 100824 / MB4) (Thermoanaerobacter tengcongensis), this protein is Phosphoribosylaminoimidazole-succinocarboxamide synthase.